Reading from the N-terminus, the 95-residue chain is Aspartyl/glutamyl-tRNA(Asn/Gln) amidotransferase subunit C (95 aa).

It belongs to the GatC family. In terms of assembly, heterotrimer of A, B and C subunits.

It carries out the reaction L-glutamyl-tRNA(Gln) + L-glutamine + ATP + H2O = L-glutaminyl-tRNA(Gln) + L-glutamate + ADP + phosphate + H(+). The enzyme catalyses L-aspartyl-tRNA(Asn) + L-glutamine + ATP + H2O = L-asparaginyl-tRNA(Asn) + L-glutamate + ADP + phosphate + 2 H(+). Functionally, allows the formation of correctly charged Asn-tRNA(Asn) or Gln-tRNA(Gln) through the transamidation of misacylated Asp-tRNA(Asn) or Glu-tRNA(Gln) in organisms which lack either or both of asparaginyl-tRNA or glutaminyl-tRNA synthetases. The reaction takes place in the presence of glutamine and ATP through an activated phospho-Asp-tRNA(Asn) or phospho-Glu-tRNA(Gln). This Dechloromonas aromatica (strain RCB) protein is Aspartyl/glutamyl-tRNA(Asn/Gln) amidotransferase subunit C.